An 88-amino-acid polypeptide reads, in one-letter code: Small ribosomal subunit protein uS17 (88 aa).

The protein belongs to the universal ribosomal protein uS17 family. As to quaternary structure, part of the 30S ribosomal subunit.

One of the primary rRNA binding proteins, it binds specifically to the 5'-end of 16S ribosomal RNA. This is Small ribosomal subunit protein uS17 from Vesicomyosocius okutanii subsp. Calyptogena okutanii (strain HA).